We begin with the raw amino-acid sequence, 277 residues long: Phosphate import ATP-binding protein PstB 1 (277 aa).

The region spanning 27 to 272 (LRVRDLAVSY…PSHELTAAYI (246 aa)) is the ABC transporter domain. 59–66 (GPSGCGKT) provides a ligand contact to ATP.

This sequence belongs to the ABC transporter superfamily. Phosphate importer (TC 3.A.1.7) family. As to quaternary structure, the complex is composed of two ATP-binding proteins (PstB), two transmembrane proteins (PstC and PstA) and a solute-binding protein (PstS).

Its subcellular location is the cell inner membrane. The catalysed reaction is phosphate(out) + ATP + H2O = ADP + 2 phosphate(in) + H(+). Its function is as follows. Part of the ABC transporter complex PstSACB involved in phosphate import. Responsible for energy coupling to the transport system. This is Phosphate import ATP-binding protein PstB 1 from Nitrosococcus oceani (strain ATCC 19707 / BCRC 17464 / JCM 30415 / NCIMB 11848 / C-107).